The chain runs to 417 residues: PRKCA-binding protein (417 aa).

Residues 22–105 enclose the PDZ domain; sequence KVTLQKDAQN…EVTIHYNKLQ (84 aa). Zn(2+) contacts are provided by cysteine 44 and cysteine 46. The residue at position 82 (threonine 82) is a Phosphothreonine. One can recognise an AH domain in the interval 144 to 357; sequence LCNDGLVKRL…CYSVLRDADV (214 aa). The disordered stretch occupies residues 375–417; it reads QDEFTDGEDEEDEDEEDTAAGEPPRDSRGAAGPLDKGGSWCNS. Acidic residues predominate over residues 377-393; it reads EFTDGEDEEDEDEEDTA. A lipid anchor (S-palmitoyl cysteine; by DHHC8) is attached at cysteine 415.

As to quaternary structure, monomer and homodimer. Interacts with CXADR. Interacts presynaptically with the glutamate receptors GRIA2, GRIA3, GRIK3, isoform 3 of GRIA4, isoform A of GRM4, GRM7 and GRM8; with NAPA and NAPB; and with BTG2. The interaction with NAPA and NAPB disrupts the interaction with GRIA2, conducting to the internalization of GRIA2. Interacts with PRKCA; with the amine transporters SLC6A2 and SLC6A3; with the channels ASIC1 and ASIC2; with the GTP-binding proteins ARF1 and ARF3; with the ephrin receptor tyrosine kinases EPHA7, EPHB1 and EPHB2; with ERBB2 and through its PDZ domain with the C-terminal tail of PRLHR. Interacts with UNC5A. Interacts (via AH domain) with NCS1/FREQ; in a calcium-dependent manner. Interacts with F-actin and associates with the ARP2/3 complex. Interacts (via PDZ domain) with ARF1 (activated); the interaction blocks Arp2/3 complex inhibition. Interacts with SORCS3. Phosphorylation at Thr-82 appears to inhibit the interaction with AMPA receptors. In terms of processing, palmitoylation on Cys-415 is essential for long-term synaptic depression (LTD).

It localises to the cytoplasm. It is found in the perinuclear region. The protein resides in the membrane. The protein localises to the postsynaptic density. Its subcellular location is the synapse. It localises to the synaptosome. It is found in the cytoskeleton. Its function is as follows. Probable adapter protein that bind to and organize the subcellular localization of a variety of membrane proteins containing some PDZ recognition sequence. Involved in the clustering of various receptors, possibly by acting at the receptor internalization level. Plays a role in synaptic plasticity by regulating the trafficking and internalization of AMPA receptors. May be regulated upon PRKCA activation. May regulate ASIC1/ASIC3 channel. Regulates actin polymerization by inhibiting the actin-nucleating activity of the Arp2/3 complex; the function is competitive with nucleation promoting factors and is linked to neuronal morphology regulation and AMPA receptor (AMPAR) endocytosis. Via interaction with the Arp2/3 complex involved in regulation of synaptic plasicity of excitatory synapses and required for spine shrinkage during long-term depression (LTD). Involved in regulation of astrocyte morphology, antagonistic to Arp2/3 complex activator WASL/N-WASP function. In Bos taurus (Bovine), this protein is PRKCA-binding protein (PICK1).